Here is a 380-residue protein sequence, read N- to C-terminus: GPI-anchor transamidase (380 aa).

The N-terminal stretch at 1-19 (MIVQFVALLLLNLLQIIAA) is a signal peptide. The Lumenal segment spans residues 20 to 354 (ESSHTNNWAV…TRELKYKKHP (335 aa)). Catalysis depends on residues histidine 145 and cysteine 187. N-linked (GlcNAc...) asparagine glycosylation occurs at asparagine 307. Residues 355–375 (ISRIISAVVCISFSIGFPYYA) form a helical membrane-spanning segment. Over 376–380 (SKYLK) the chain is Cytoplasmic.

This sequence belongs to the peptidase C13 family. Forms a complex with PIG-T homolog, PIG-U homolog and PIG-S homolog. Post-translationally, the disulfide bond between PIGK/GPI8 and PIGT is important for normal enzyme activity.

The protein resides in the endoplasmic reticulum membrane. It functions in the pathway glycolipid biosynthesis; glycosylphosphatidylinositol-anchor biosynthesis. Mediates GPI anchoring in the endoplasmic reticulum, by replacing a protein's C-terminal GPI attachment signal peptide with a pre-assembled GPI. During this transamidation reaction, the GPI transamidase forms a carbonyl intermediate with the substrate protein. In Schizosaccharomyces pombe (strain 972 / ATCC 24843) (Fission yeast), this protein is GPI-anchor transamidase (gpi8).